Here is a 786-residue protein sequence, read N- to C-terminus: Endonuclease MutS2 (786 aa).

332–339 is a binding site for ATP; sequence GPNTGGKT. A Smr domain is found at 710–785; the sequence is VDLRGLDAEE…GDGVTMVELK (76 aa).

This sequence belongs to the DNA mismatch repair MutS family. MutS2 subfamily. As to quaternary structure, homodimer. Binds to stalled ribosomes, contacting rRNA.

Its function is as follows. Endonuclease that is involved in the suppression of homologous recombination and thus may have a key role in the control of bacterial genetic diversity. Functionally, acts as a ribosome collision sensor, splitting the ribosome into its 2 subunits. Detects stalled/collided 70S ribosomes which it binds and splits by an ATP-hydrolysis driven conformational change. Acts upstream of the ribosome quality control system (RQC), a ribosome-associated complex that mediates the extraction of incompletely synthesized nascent chains from stalled ribosomes and their subsequent degradation. Probably generates substrates for RQC. The sequence is that of Endonuclease MutS2 from Clostridium beijerinckii (strain ATCC 51743 / NCIMB 8052) (Clostridium acetobutylicum).